The following is a 347-amino-acid chain: Bombesin receptor-activated protein C6orf89 (347 aa).

Over 1–58 (MDLAANEISIYDKLSETVDLVRQTGHQCGMSEKAIEKFIRQLLEKNEPQRPPPQYPLL) the chain is Cytoplasmic. A helical transmembrane segment spans residues 59-79 (IVVYKVLATLGLILLTAYFVI). At 80–347 (QPFSPLAPEP…ICDGTAFSEL (268 aa)) the chain is on the extracellular side.

In terms of assembly, homodimer. Interacts with BRS3. Interacts (via N-terminus) with SIN3B. In terms of processing, glycosylated.

It is found in the golgi apparatus membrane. It localises to the midbody. Its subcellular location is the cytoplasm. The protein localises to the nucleus. The protein resides in the nucleolus. Exhibits histone deacetylase (HDAC) enhancer properties. May play a role in cell cycle progression and wound repair of bronchial epithelial cells. The sequence is that of Bombesin receptor-activated protein C6orf89 (C6orf89) from Homo sapiens (Human).